A 157-amino-acid chain; its full sequence is Glycine-rich RNA-binding protein (157 aa).

The RRM domain maps to 6–84; the sequence is YRCFVGGLAW…RNITVNEAQS (79 aa). Residues 70 to 157 are disordered; that stretch reads QELDGRNITV…YGGGGGGSRW (88 aa). Composition is skewed to gly residues over residues 86–138 and 145–157; these read GSGG…GGYG and DGGYGGGGGGSRW.

Its function is as follows. May play a role in the biosynthesis and processing of heterogeneous nuclear RNA and in the maturation of specific mRNAs in response to wounding. The protein is Glycine-rich RNA-binding protein of Daucus carota (Wild carrot).